Consider the following 435-residue polypeptide: tRNA-2-methylthio-N(6)-dimethylallyladenosine synthase (435 aa).

Residues Lys2–Asn117 form the MTTase N-terminal domain. [4Fe-4S] cluster contacts are provided by Cys11, Cys47, Cys80, Cys154, Cys158, and Cys161. Residues Phe140–Tyr370 enclose the Radical SAM core domain. A TRAM domain is found at Ser373 to Val435.

This sequence belongs to the methylthiotransferase family. MiaB subfamily. In terms of assembly, monomer. The cofactor is [4Fe-4S] cluster.

The protein localises to the cytoplasm. The catalysed reaction is N(6)-dimethylallyladenosine(37) in tRNA + (sulfur carrier)-SH + AH2 + 2 S-adenosyl-L-methionine = 2-methylsulfanyl-N(6)-dimethylallyladenosine(37) in tRNA + (sulfur carrier)-H + 5'-deoxyadenosine + L-methionine + A + S-adenosyl-L-homocysteine + 2 H(+). Functionally, catalyzes the methylthiolation of N6-(dimethylallyl)adenosine (i(6)A), leading to the formation of 2-methylthio-N6-(dimethylallyl)adenosine (ms(2)i(6)A) at position 37 in tRNAs that read codons beginning with uridine. The sequence is that of tRNA-2-methylthio-N(6)-dimethylallyladenosine synthase from Fusobacterium nucleatum subsp. nucleatum (strain ATCC 25586 / DSM 15643 / BCRC 10681 / CIP 101130 / JCM 8532 / KCTC 2640 / LMG 13131 / VPI 4355).